The primary structure comprises 3313 residues: PHD finger protein rhinoceros (3313 aa).

The span at 1-16 (MSQRGKRGNQHHHQSH) shows a compositional bias: basic residues. The tract at residues 1-136 (MSQRGKRGNQ…QGASTSSSWQ (136 aa)) is disordered. Composition is skewed to low complexity over residues 42 to 71 (PPNGATTAAAAIAAAAAAAAAAAAGTATGG) and 100 to 134 (LGAASSSSSITKSKSTKLAKSSSKSKSQGASTSSS). The segment at 323–373 (NVICDVCRSPDSEEANEMVFCDNCNICVHQACYGITAIPSGQWLCRTCSMG) adopts a PHD-type 1 zinc-finger fold. Residues 375-409 (TPDCVLCPNKAGAMKSNKSGKHWAHVSCALWIPEV) form a C2HC pre-PHD-type zinc finger. A PHD-type 2; degenerate zinc finger spans residues 433–487 (LVCVLCRKRVGSCIQCSKHSMSKGKKENAGGASGGGSASVTSSMHKANKYATGTG). 17 disordered regions span residues 453–526 (MSKG…ARAQ), 708–1076 (LQSG…TKAA), 1107–1842 (KEAK…PPSH), 1961–2033 (AQKE…TMGN), 2104–2136 (PVTAQSGAGSNSNKLSDYDENTRMQSPFGRMQR), 2145–2164 (ARRSSSPSSVSESNDQPPAT), 2219–2252 (AAPQQQTTPTHQQQQQQQQQQQQQRTPNSQFNGG), 2353–2374 (PAYPAHPAHPAHPAHPAHPAHP), 2398–2514 (VAAK…PPPM), 2563–2587 (TTRGQPKPTPAPTAATTTNPLLHPV), 2647–2679 (ATGTGTSPSKHPAVSAAPVAPAPAPAANSQPPA), 2827–2871 (SCGL…SSSR), 2888–2954 (LAGA…IKIR), 2978–2998 (YEMTRRACPPKKRLTSNYSTP), 3017–3077 (DFDK…SATT), 3144–3233 (KAEK…SLPE), and 3259–3313 (YENS…CEVR). The span at 512–526 (KNDMTSEERNQARAQ) shows a compositional bias: basic and acidic residues. The segment covering 735-749 (KKLNNGAITSRTSSP) has biased composition (polar residues). A compositionally biased stretch (low complexity) spans 760-772 (STSTSTATATTAA). A compositionally biased stretch (polar residues) spans 792-802 (GAATGTSTHNK). Composition is skewed to low complexity over residues 803–861 (TQSQ…ASGI) and 894–912 (EAAAGASAASPNSRSATSS). The span at 919-934 (QQRRRQEPERERDGRG) shows a compositional bias: basic and acidic residues. Over residues 942–955 (TVPNRTQPTKSKQS) the composition is skewed to polar residues. The segment covering 956 to 972 (TQADAGSGAGTGAAVET) has biased composition (low complexity). A compositionally biased stretch (acidic residues) spans 994–1003 (ESLSSDESEE). Low complexity predominate over residues 1015 to 1025 (AALSSGLAASG). Polar residues predominate over residues 1058–1072 (VESNVSDSQNQQTIR). Basic and acidic residues-rich tracts occupy residues 1159-1168 (AADRMREPES) and 1178-1205 (KLKDSGSKQATEADKFGGGDKVRSKEQS). The segment covering 1250–1266 (EAKSTAPAAKPTAAKTS) has biased composition (low complexity). The segment covering 1285–1301 (LKSSKPLQDTTFSTANE) has biased composition (polar residues). Low complexity-rich tracts occupy residues 1308 to 1324 (AATTATTTGMTTLGVAT), 1377 to 1404 (SSSSSGDSDSSSSSSSSGSSSSSGSGSD), and 1451 to 1464 (PAASAAAAAAAAAT). Residues 1475–1485 (TARTRQNSTNK) are compositionally biased toward polar residues. Residues 1551 to 1579 (SPEKQTARRKSRADESPKKIPNLEHEINQ) are compositionally biased toward basic and acidic residues. Positions 1638–1650 (PVVEPEVETEIEP) are enriched in acidic residues. The segment covering 1667 to 1678 (TAPTHTQLSANA) has biased composition (polar residues). Over residues 1691-1702 (PAAPLPASPTPT) the composition is skewed to pro residues. A compositionally biased stretch (basic residues) spans 1722-1734 (SRWRSRRRRRRRS). Positions 1744 to 1773 (HTQHLLNEMEMARELEEERKNELLANASKY) form a coiled coil. Over residues 1753 to 1765 (EMARELEEERKNE) the composition is skewed to basic and acidic residues. Polar residues-rich tracts occupy residues 1771 to 1781 (SKYSASTSSPA) and 1796 to 1805 (DSNSANSGGD). The segment covering 1806–1819 (QQQQQQQQPLPQQL) has biased composition (low complexity). Residues 1823–1832 (SPSSEVASTI) show a composition bias toward polar residues. Over residues 1965–1984 (QQQQQQQQQQQQQQQQQQQQ) the composition is skewed to low complexity. Composition is skewed to polar residues over residues 1985–1999 (SCLYGNSSGPNSVAS) and 2007–2018 (MTANSGSYANSL). The segment covering 2019–2033 (TNTPNATPTNATMGN) has biased composition (low complexity). The segment covering 2106–2118 (TAQSGAGSNSNKL) has biased composition (polar residues). Low complexity-rich tracts occupy residues 2148-2157 (SSSPSSVSES) and 2222-2242 (QQQTTPTHQQQQQQQQQQQQQ). The segment covering 2439-2451 (PVQPQPPTPPAPA) has biased composition (pro residues). The segment covering 2479–2488 (GSGGSGAPGR) has biased composition (gly residues). Low complexity predominate over residues 2658-2679 (PAVSAAPVAPAPAPAANSQPPA). Positions 2891 to 2900 (ASGGGAGTAS) are enriched in gly residues. Residues 2909–2924 (CSSGSNNDNNGKTGAA) are compositionally biased toward polar residues. The segment covering 2935–2946 (KTLESSEDDHQT) has biased composition (basic and acidic residues). Over residues 3017–3026 (DFDKGEENNK) the composition is skewed to basic and acidic residues. Residues 3046 to 3065 (KRPKSSKPKKDKKEKKRQKQ) are compositionally biased toward basic residues. Over residues 3179-3198 (TSPQGLLLNSFTPHSQNANA) the composition is skewed to polar residues. A compositionally biased stretch (low complexity) spans 3268 to 3290 (SASGTGSASSNSCNSNSNNNNNN). Residues 3291 to 3302 (GSGGGAASGGGS) show a composition bias toward gly residues.

The protein belongs to the JADE family.

The protein localises to the nucleus. In terms of biological role, may function as a negative regulator of the EGFR/Ras/MAPK signaling pathway during eye development. In Drosophila pseudoobscura pseudoobscura (Fruit fly), this protein is PHD finger protein rhinoceros (rno).